The following is a 341-amino-acid chain: Heme A synthase (341 aa).

The next 5 membrane-spanning stretches (helical) occupy residues 11-31, 101-121, 127-147, 160-180, and 194-214; these read AVSTWLLVVAALVCAMIIIGG, LIGLVYFVPFVFFWMRGHLSA, LFGLFLLGGAQGAIGWWMVAS, LATHLGMAFVILGLSIWFSLE, and AGVTAGLLGLVFVQIILGAFV. His-259 lines the heme pocket. Transmembrane regions (helical) follow at residues 261 to 278, 288 to 308, and 315 to 335; these read WTGYLVALGVFAYAWQVW, FMVILPALVIGQIALGIAALL, and LSLAHQAGAILLFIAMVAAAW. His-319 contributes to the heme binding site.

This sequence belongs to the COX15/CtaA family. Type 2 subfamily. In terms of assembly, interacts with CtaB. The cofactor is heme b.

The protein localises to the cell membrane. The enzyme catalyses Fe(II)-heme o + 2 A + H2O = Fe(II)-heme a + 2 AH2. It participates in porphyrin-containing compound metabolism; heme A biosynthesis; heme A from heme O: step 1/1. Catalyzes the conversion of heme O to heme A by two successive hydroxylations of the methyl group at C8. The first hydroxylation forms heme I, the second hydroxylation results in an unstable dihydroxymethyl group, which spontaneously dehydrates, resulting in the formyl group of heme A. This Maricaulis maris (strain MCS10) (Caulobacter maris) protein is Heme A synthase.